An 86-amino-acid polypeptide reads, in one-letter code: Small ribosomal subunit protein uS17 (86 aa).

This sequence belongs to the universal ribosomal protein uS17 family. Part of the 30S ribosomal subunit.

Functionally, one of the primary rRNA binding proteins, it binds specifically to the 5'-end of 16S ribosomal RNA. In Tropheryma whipplei (strain TW08/27) (Whipple's bacillus), this protein is Small ribosomal subunit protein uS17.